We begin with the raw amino-acid sequence, 161 residues long: GTP-dependent dephospho-CoA kinase (161 aa).

GTP contacts are provided by Asp40, Val41, Val42, Asp59, and Glu112.

The protein belongs to the GTP-dependent DPCK family.

It catalyses the reaction 3'-dephospho-CoA + GTP = GDP + CoA + H(+). It functions in the pathway cofactor biosynthesis; coenzyme A biosynthesis. Catalyzes the GTP-dependent phosphorylation of the 3'-hydroxyl group of dephosphocoenzyme A to form coenzyme A (CoA). This Methanoculleus marisnigri (strain ATCC 35101 / DSM 1498 / JR1) protein is GTP-dependent dephospho-CoA kinase.